A 359-amino-acid polypeptide reads, in one-letter code: Fructose-1,6-bisphosphatase class 1 (359 aa).

Mg(2+) is bound by residues Glu95, Asp117, Leu119, and Asp120. Residues 120-123 and Asn212 contribute to the substrate site; that span reads DGSS. Glu284 serves as a coordination point for Mg(2+).

This sequence belongs to the FBPase class 1 family. As to quaternary structure, homotetramer. Requires Mg(2+) as cofactor.

Its subcellular location is the cytoplasm. The catalysed reaction is beta-D-fructose 1,6-bisphosphate + H2O = beta-D-fructose 6-phosphate + phosphate. The protein operates within carbohydrate biosynthesis; gluconeogenesis. This Hydrogenophilus thermoluteolus (Pseudomonas hydrogenothermophila) protein is Fructose-1,6-bisphosphatase class 1.